The following is a 313-amino-acid chain: Beta-lactamase BRO-1 (313 aa).

An N-terminal signal peptide occupies residues 1–25 (MQRRHFLQKTLLALPIIFSGNLLTG). Cysteine 26 is lipidated: N-palmitoyl cysteine. Cysteine 26 is lipidated: S-diacylglycerol cysteine. Serine 90 acts as the Acyl-ester intermediate in catalysis. 255 to 257 (KTG) serves as a coordination point for substrate.

It belongs to the class-A beta-lactamase family.

It is found in the cell membrane. The catalysed reaction is a beta-lactam + H2O = a substituted beta-amino acid. The sequence is that of Beta-lactamase BRO-1 (bla) from Moraxella catarrhalis (Branhamella catarrhalis).